We begin with the raw amino-acid sequence, 295 residues long: 4-hydroxy-tetrahydrodipicolinate synthase (295 aa).

T48 provides a ligand contact to pyruvate. The Proton donor/acceptor role is filled by Y136. K164 functions as the Schiff-base intermediate with substrate in the catalytic mechanism. I206 lines the pyruvate pocket.

Belongs to the DapA family. Homotetramer; dimer of dimers.

The protein localises to the cytoplasm. It catalyses the reaction L-aspartate 4-semialdehyde + pyruvate = (2S,4S)-4-hydroxy-2,3,4,5-tetrahydrodipicolinate + H2O + H(+). The protein operates within amino-acid biosynthesis; L-lysine biosynthesis via DAP pathway; (S)-tetrahydrodipicolinate from L-aspartate: step 3/4. Its function is as follows. Catalyzes the condensation of (S)-aspartate-beta-semialdehyde [(S)-ASA] and pyruvate to 4-hydroxy-tetrahydrodipicolinate (HTPA). The polypeptide is 4-hydroxy-tetrahydrodipicolinate synthase (Actinobacillus pleuropneumoniae serotype 7 (strain AP76)).